We begin with the raw amino-acid sequence, 223 residues long: Capsid protein (223 aa).

Over residues 1 to 19 (MDDETKKLKNKNKETKEGD) the composition is skewed to basic and acidic residues. The tract at residues 1-21 (MDDETKKLKNKNKETKEGDDV) is disordered.

The protein belongs to the closteroviridae capsid protein family. Consists of at least two size variants, CP1 and CP2, which result of post-translational proteolysis at sites approximately 12 to 15 and 26 AA from the N-terminus respectively.

It localises to the virion. This Citrus tristeza virus (isolate T36) (CTV) protein is Capsid protein.